The chain runs to 338 residues: Histone acetyltransferase SAS2 (338 aa).

Polar residues predominate over residues methionine 1–lysine 15. A disordered region spans residues methionine 1–alanine 31. Basic residues predominate over residues leucine 16–alanine 31. The region spanning leucine 45–aspartate 338 is the MYST-type HAT domain. The C2HC MYST-type zinc-finger motif lies at leucine 100–glutamine 126. Residue lysine 168 is modified to N6-acetyllysine; by autocatalysis. Acetyl-CoA is bound by residues isoleucine 209–isoleucine 211 and glutamine 216–leucine 222. Glutamate 242 (proton donor/acceptor) is an active-site residue. The acetyl-CoA site is built by serine 246 and lysine 323.

This sequence belongs to the MYST (SAS/MOZ) family. In terms of assembly, interacts with CAC1. Component of the SAS complex, at least composed of SAS2, SAS4 and SAS5. These three proteins constitute the core of the complex and are sufficient to acetylate histones. SAS4 is essential for HAT activity of the complex, while SAS5 is required for maxiaml HAT activity. Autoacetylation at Lys-168 is required for proper function.

It is found in the cytoplasm. It localises to the nucleus. It carries out the reaction L-lysyl-[protein] + acetyl-CoA = N(6)-acetyl-L-lysyl-[protein] + CoA + H(+). Functionally, histone acetyltransferase (HAT) subunit of the SAS complex, a multiprotein complex that acetylates 'Lys-16' of histone H4 and 'Lys-14' of histone H3. The SAS complex is however unable to acetylate nucleosomal histones. The complex is involved in transcriptional silencing at telomeres and at HML locus. Also involved in rDNA silencing and G0 control. The polypeptide is Histone acetyltransferase SAS2 (SAS2) (Saccharomyces cerevisiae (strain ATCC 204508 / S288c) (Baker's yeast)).